The chain runs to 3284 residues: Location of vulva defective 1 (3284 aa).

The first 21 residues, 1-21 (MKKSNFFVLLLLAISAIQIDG), serve as a signal peptide directing secretion. Disordered regions lie at residues 226 to 326 (ESTS…ITST), 350 to 505 (TTML…GTNP), 623 to 702 (VASS…ADST), 827 to 926 (STSE…ASTE), and 1043 to 1216 (TTTE…SLAT). 2 stretches are compositionally biased toward low complexity: residues 227 to 326 (STST…ITST) and 350 to 500 (TTML…TTSS). Over residues 827-913 (STSEVTSTTS…PSDSSSASDS (87 aa)) the composition is skewed to low complexity. Over residues 914–926 (MRTTTVDPDASTE) the composition is skewed to polar residues. A compositionally biased stretch (low complexity) spans 1043 to 1057 (TTTETPPTTVSSSDD). Residues 1060–1078 (GKTGGTGATGGTGGTGSGG) are compositionally biased toward gly residues. Low complexity predominate over residues 1079-1104 (SATTLSTGDAVRSTTSGSGSGQSSTG). A compositionally biased stretch (gly residues) spans 1105–1127 (SGAGGSGTTASGSGSGGSSGTGS). Over residues 1128–1138 (DGVNSGKTTAL) the composition is skewed to polar residues. A compositionally biased stretch (low complexity) spans 1163–1192 (GSGSDSNGSSGVSTKSSSGSDTSGSSDSSG). A compositionally biased stretch (polar residues) spans 1197–1216 (FSATAQPSTRTTKTRSSLAT). Positions 2064–2227 (WNNSLQVEII…SVGAFNPTID (164 aa)) constitute a GAIN-B domain. A disulfide bridge connects residues Cys2181 and Cys2209. The GPS stretch occupies residues 2181–2227 (CYFYQKTSDVFNSEGMYPSDGQGMQFVNCSTDHLTMFSVGAFNPTID). A helical transmembrane segment spans residues 2245-2265 (VMIAAVFMLVVYGCLTINAII). One can recognise a PLAT domain in the interval 2288–2411 (YMYVIAVETG…GDGETERLAR (124 aa)). A run of 10 helical transmembrane segments spans residues 2453-2473 (DYSV…ITIL), 2496-2516 (IAFG…HILL), 2557-2577 (IIVF…MSLM), 2592-2612 (LILW…FLIL), 2672-2692 (LFIT…MVML), 2945-2965 (MLYI…YLYG), 2994-3014 (WNFM…AYTI), 3043-3063 (WEIV…CKMI), 3089-3109 (FGIA…AVLG), and 3144-3164 (FAFV…LQLY).

This sequence belongs to the polycystin family. Interacts (via PLAT domain) with atp-2 (via N-terminus) and with kin-10 (via C-terminus). Interacts (via C-terminus) with isoform a of stam-1/pqn-19 (via C-terminus). Post-translationally, autoproteolytically processed at the GPS region of the GAIN-B domain; this cleavage modulates receptor activity. Exclusively expressed in a subset of three categories of adult male sensory neurons: ray neurons, hook neurons and head cephalic (CEM) neurons.

The protein localises to the membrane. It is found in the cell projection. Its subcellular location is the cilium. Required for two aspects of male mating behavior: response to hermaphrodite contact and vulva location. Acts in the same pathway as pkd-2 and atp-2 in response behavior. May be required for ciliary targeting of pkd-2. In Caenorhabditis elegans, this protein is Location of vulva defective 1 (lov-1).